Here is a 202-residue protein sequence, read N- to C-terminus: Na(+)-translocating NADH-quinone reductase subunit E (202 aa).

6 helical membrane-spanning segments follow: residues 11–31 (SVFI…FIAV), 35–55 (IETA…TVPA), 81–101 (FIAL…LEMV), 114–134 (GIFL…LFMI), 144–164 (VVYG…MAGV), and 180–200 (LGIT…FSGI).

Belongs to the NqrDE/RnfAE family. In terms of assembly, composed of six subunits; NqrA, NqrB, NqrC, NqrD, NqrE and NqrF.

It localises to the cell inner membrane. It carries out the reaction a ubiquinone + n Na(+)(in) + NADH + H(+) = a ubiquinol + n Na(+)(out) + NAD(+). Its function is as follows. NQR complex catalyzes the reduction of ubiquinone-1 to ubiquinol by two successive reactions, coupled with the transport of Na(+) ions from the cytoplasm to the periplasm. NqrA to NqrE are probably involved in the second step, the conversion of ubisemiquinone to ubiquinol. This is Na(+)-translocating NADH-quinone reductase subunit E from Methylococcus capsulatus (strain ATCC 33009 / NCIMB 11132 / Bath).